A 259-amino-acid chain; its full sequence is Ribosomal RNA small subunit methyltransferase J (259 aa).

S-adenosyl-L-methionine contacts are provided by residues 109-110 (RD), 125-126 (ER), 161-162 (SS), and Asp-179.

It belongs to the methyltransferase superfamily. RsmJ family.

It is found in the cytoplasm. It carries out the reaction guanosine(1516) in 16S rRNA + S-adenosyl-L-methionine = N(2)-methylguanosine(1516) in 16S rRNA + S-adenosyl-L-homocysteine + H(+). In terms of biological role, specifically methylates the guanosine in position 1516 of 16S rRNA. The polypeptide is Ribosomal RNA small subunit methyltransferase J (Shewanella putrefaciens (strain CN-32 / ATCC BAA-453)).